The following is a 508-amino-acid chain: Aspartic proteinase A3 (508 aa).

Positions 1–25 (MGTRFQSFLLVFLLSCLILISTASC) are cleaved as a signal peptide. Residues 26 to 69 (ERNGDGTIRIGLKKRKLDRSNRLASQLFLKNRGSHWSPKHYFRL) constitute a propeptide, activation peptide. Residues 87–505 (YYGDITIGTP…DYGKGRVGFA (419 aa)) form the Peptidase A1 domain. D105 is a catalytic residue. Disulfide bonds link C118–C124 and C283–C287. The active site involves D292. A Saposin B-type domain is found at 317 to 419 (IVSRECKAVV…AELCDHIPTQ (103 aa)). Cystine bridges form between C322–C413, C347–C385, C353–C382, and C427–C464. N399 is a glycosylation site (N-linked (GlcNAc...) asparagine).

The protein belongs to the peptidase A1 family. In terms of tissue distribution, expressed in petals, carpels and seed pods.

The protein localises to the secreted. In terms of biological role, involved in the processing and degradation of storage proteins. In Arabidopsis thaliana (Mouse-ear cress), this protein is Aspartic proteinase A3 (APA3).